We begin with the raw amino-acid sequence, 509 residues long: Lysine--tRNA ligase (509 aa).

Residues 1–18 (MSEQNPTQAAKQAPQQEL) show a composition bias toward polar residues. The tract at residues 1–20 (MSEQNPTQAAKQAPQQELND) is disordered. Residues E418 and E425 each coordinate Mg(2+).

The protein belongs to the class-II aminoacyl-tRNA synthetase family. In terms of assembly, homodimer. It depends on Mg(2+) as a cofactor.

The protein localises to the cytoplasm. The enzyme catalyses tRNA(Lys) + L-lysine + ATP = L-lysyl-tRNA(Lys) + AMP + diphosphate. The protein is Lysine--tRNA ligase of Psychromonas ingrahamii (strain DSM 17664 / CCUG 51855 / 37).